The sequence spans 774 residues: Formin-like protein 13 (774 aa).

An N-terminal signal peptide occupies residues 1–22; that stretch reads MRRRVALSTAIALLVGAQLCVA. Residues 51–67 show a composition bias toward pro residues; it reads PPPPMSGSEAVPPPPPA. Residues 51–78 are disordered; it reads PPPPMSGSEAVPPPPPAAAASATTGGGR. The segment covering 68–78 has biased composition (low complexity); the sequence is AAASATTGGGR. The helical transmembrane segment at 89–109 threads the bilayer; that stretch reads IALSAGLVALAVASYSCCLLL. Disordered regions lie at residues 130 to 163, 176 to 338, 374 to 402, and 740 to 774; these read AAAA…DAIY, HEKS…HLKP, FLNS…RRLL, and GSGK…SSSS. The segment covering 194–216 has biased composition (pro residues); it reads DLRPLPPLKRPESQPPPPPPSTP. Positions 242 to 261 are enriched in low complexity; that stretch reads SSFSRSTSQHSTLEQTAMPP. Positions 262-286 are enriched in pro residues; it reads MAAPAPPQTNPPRPVRPPPPPPPPR. The region spanning 326–749 is the FH2 domain; the sequence is GAARPPKPPH…GSGKSFRVPA (424 aa).

The protein belongs to the formin-like family. Class-I subfamily.

It localises to the membrane. The protein is Formin-like protein 13 (FH13) of Oryza sativa subsp. japonica (Rice).